The primary structure comprises 531 residues: Unconventional prefoldin RPB5 interactor (531 aa).

N-acetylmethionine is present on methionine 1. Disordered regions lie at residues 1-24, 224-381, 408-470, and 500-531; these read MEPP…APLR, ELES…ELPA, KSRS…SGVS, and TIPE…QQRS. Positions 13-24 are enriched in low complexity; that stretch reads PLAEASAAAPLR. Polar residues-rich tracts occupy residues 257–266 and 280–296; these read SPVTDSSAAS and GQVN…NSYH. Residues 300–319 show a composition bias toward acidic residues; it reads DDDEEEEDDDDDDDEDDDNE. At serine 369 the chain carries Phosphoserine; by RPS6KB1. The span at 414–424 shows a compositional bias: polar residues; the sequence is NSVCSDTSESS. Serine 439 is subject to Phosphoserine.

Belongs to the RNA polymerase II subunit 5-mediating protein family. In terms of assembly, homodimer. Component of the PAQosome complex which is responsible for the biogenesis of several protein complexes and which consists of R2TP complex members RUVBL1, RUVBL2, RPAP3 and PIH1D1, URI complex members PFDN2, PFDN6, PDRG1, UXT and URI1 as well as ASDURF, POLR2E and DNAAF10/WDR92. Interacts with POLR2E/RPB5, RUVBL2 and RUVBL1. Interacts with PFDN2, PFDN4 and STAP1; the interactions are phosphorylation-dependent and occur in a growth-dependent manner in the mitochondrion. Interacts with UXT. Interacts with PPP1CC; the interaction is phosphorylation-dependent and occurs in a growth factor-dependent manner. Interacts (via the middle C-terminal region) with GTF2F1 and GTF2F2. Interacts with DMAP1. Interacts with TSC1 and TSC2. Interacts with PRPF8 and EFTUD2 in a ZNHIT2-dependent manner. Post-translationally, phosphorylation occurs in response to androgen treatment in prostate cancer cells in a mTOR-dependent manner. Phosphorylated; hyperhosphorylated in mitochondria in a mTORC-dependent signaling pathway. Phosphorylated at Ser-369 by RPS6KB1 in a growth factor- and rapamycin-dependent manner. S6K1-mediated mitochondrial phosphorylation at Ser-369 disrupts the URI1-PPP1CC complex in the mitochondrion, relieves PPP1CC phosphatase inhibition activity and hence engages a negative feedback diminishing RPS6KB1 kinase activity, preventing sustained S6K1-dependent signaling. Phosphorylated. Phosphorylation occurs essentially on serine residues. Expressed in the spinal cord, ganglia, choroid plexus and olfactors epithelium of the developing brain. Expressed in skin, lung, kidney, testis and muscles (at protein level). Expressed strongly in brain and kidney. Expressed weakly in skeletal muscle, lung and liver.

The protein resides in the nucleus. Its subcellular location is the cytoplasm. The protein localises to the mitochondrion. It is found in the cell projection. It localises to the dendrite. Functionally, involved in gene transcription regulation. Acts as a transcriptional repressor in concert with the corepressor UXT to regulate androgen receptor (AR) transcription. May act as a tumor suppressor to repress AR-mediated gene transcription and to inhibit anchorage-independent growth in prostate cancer cells. Required for cell survival in ovarian cancer cells. Together with UXT, associates with chromatin to the NKX3-1 promoter region. Plays a central role in maintaining S6K1 signaling and BAD phosphorylation under normal growth conditions thereby protecting cells from potential deleterious effects of sustained S6K1 signaling. The URI1-PPP1CC complex acts as a central component of a negative feedback mechanism that counteracts excessive S6K1 survival signaling to BAD in response to growth factors. Mediates inhibition of PPP1CC phosphatase activity in mitochondria. Coordinates the regulation of nutrient-sensitive gene expression availability in a mTOR-dependent manner. Seems to be a scaffolding protein able to assemble a prefoldin-like complex that contains PFDs and proteins with roles in transcription and ubiquitination. The polypeptide is Unconventional prefoldin RPB5 interactor (Uri1) (Mus musculus (Mouse)).